Here is a 425-residue protein sequence, read N- to C-terminus: Enolase (425 aa).

A (2R)-2-phosphoglycerate-binding site is contributed by glutamine 170. The active-site Proton donor is glutamate 214. Residues aspartate 250, glutamate 291, and aspartate 317 each contribute to the Mg(2+) site. 4 residues coordinate (2R)-2-phosphoglycerate: lysine 342, arginine 371, serine 372, and lysine 393. The active-site Proton acceptor is lysine 342.

This sequence belongs to the enolase family. The cofactor is Mg(2+).

It is found in the cytoplasm. Its subcellular location is the secreted. The protein resides in the cell surface. The enzyme catalyses (2R)-2-phosphoglycerate = phosphoenolpyruvate + H2O. It functions in the pathway carbohydrate degradation; glycolysis; pyruvate from D-glyceraldehyde 3-phosphate: step 4/5. Functionally, catalyzes the reversible conversion of 2-phosphoglycerate (2-PG) into phosphoenolpyruvate (PEP). It is essential for the degradation of carbohydrates via glycolysis. The polypeptide is Enolase (Methanococcoides burtonii (strain DSM 6242 / NBRC 107633 / OCM 468 / ACE-M)).